We begin with the raw amino-acid sequence, 345 residues long: Phosphoribosylformylglycinamidine cyclo-ligase (345 aa).

Belongs to the AIR synthase family.

It is found in the cytoplasm. The catalysed reaction is 2-formamido-N(1)-(5-O-phospho-beta-D-ribosyl)acetamidine + ATP = 5-amino-1-(5-phospho-beta-D-ribosyl)imidazole + ADP + phosphate + H(+). Its pathway is purine metabolism; IMP biosynthesis via de novo pathway; 5-amino-1-(5-phospho-D-ribosyl)imidazole from N(2)-formyl-N(1)-(5-phospho-D-ribosyl)glycinamide: step 2/2. This chain is Phosphoribosylformylglycinamidine cyclo-ligase, found in Aeromonas hydrophila subsp. hydrophila (strain ATCC 7966 / DSM 30187 / BCRC 13018 / CCUG 14551 / JCM 1027 / KCTC 2358 / NCIMB 9240 / NCTC 8049).